The chain runs to 198 residues: Recombination protein RecR (198 aa).

A C4-type zinc finger spans residues 57 to 72; the sequence is CSVCGHITDQDPCYIC. The 96-residue stretch at 80-175 folds into the Toprim domain; it reads SVICVVQDPK…KLSRIAHGLP (96 aa).

Belongs to the RecR family.

In terms of biological role, may play a role in DNA repair. It seems to be involved in an RecBC-independent recombinational process of DNA repair. It may act with RecF and RecO. In Bacillus subtilis (strain 168), this protein is Recombination protein RecR.